A 390-amino-acid chain; its full sequence is GTPase Obg (390 aa).

One can recognise an Obg domain in the interval 1-159 (MKFVDEAVVK…REIRLELLLL (159 aa)). Residues 160–333 (ADVGMLGLPN…LCYKLADFME (174 aa)) form the OBG-type G domain. Residues 166-173 (GLPNAGKS), 191-195 (FTTLI), 213-216 (DIPG), 283-286 (NKVD), and 314-316 (SAI) contribute to the GTP site. S173 and T193 together coordinate Mg(2+). Residues 367 to 382 (TEDDDDWDDWDDEEDD) show a composition bias toward acidic residues. Residues 367 to 390 (TEDDDDWDDWDDEEDDGHVVYVRD) are disordered.

This sequence belongs to the TRAFAC class OBG-HflX-like GTPase superfamily. OBG GTPase family. As to quaternary structure, monomer. It depends on Mg(2+) as a cofactor.

The protein localises to the cytoplasm. In terms of biological role, an essential GTPase which binds GTP, GDP and possibly (p)ppGpp with moderate affinity, with high nucleotide exchange rates and a fairly low GTP hydrolysis rate. Plays a role in control of the cell cycle, stress response, ribosome biogenesis and in those bacteria that undergo differentiation, in morphogenesis control. The chain is GTPase Obg from Vibrio parahaemolyticus serotype O3:K6 (strain RIMD 2210633).